A 100-amino-acid polypeptide reads, in one-letter code: Co-chaperonin GroES (100 aa).

This sequence belongs to the GroES chaperonin family. In terms of assembly, heptamer of 7 subunits arranged in a ring. Interacts with the chaperonin GroEL.

It is found in the cytoplasm. Its function is as follows. Together with the chaperonin GroEL, plays an essential role in assisting protein folding. The GroEL-GroES system forms a nano-cage that allows encapsulation of the non-native substrate proteins and provides a physical environment optimized to promote and accelerate protein folding. GroES binds to the apical surface of the GroEL ring, thereby capping the opening of the GroEL channel. The polypeptide is Co-chaperonin GroES (Mycolicibacterium smegmatis (strain ATCC 700084 / mc(2)155) (Mycobacterium smegmatis)).